The primary structure comprises 117 residues: UPF0295 protein YgzB (117 aa).

2 helical membrane-spanning segments follow: residues Thr-13–Lys-33 and Leu-41–Gly-61.

The protein belongs to the UPF0295 family.

It is found in the cell membrane. This Bacillus subtilis (strain 168) protein is UPF0295 protein YgzB (ygzB).